Here is a 196-residue protein sequence, read N- to C-terminus: Imidazole glycerol phosphate synthase subunit HisH (196 aa).

In terms of domain architecture, Glutamine amidotransferase type-1 spans 2 to 196 (KIIIINTNCS…EQLIKNFLEI (195 aa)). Catalysis depends on C77, which acts as the Nucleophile. Active-site residues include H178 and E180.

As to quaternary structure, heterodimer of HisH and HisF.

Its subcellular location is the cytoplasm. It carries out the reaction 5-[(5-phospho-1-deoxy-D-ribulos-1-ylimino)methylamino]-1-(5-phospho-beta-D-ribosyl)imidazole-4-carboxamide + L-glutamine = D-erythro-1-(imidazol-4-yl)glycerol 3-phosphate + 5-amino-1-(5-phospho-beta-D-ribosyl)imidazole-4-carboxamide + L-glutamate + H(+). The enzyme catalyses L-glutamine + H2O = L-glutamate + NH4(+). It participates in amino-acid biosynthesis; L-histidine biosynthesis; L-histidine from 5-phospho-alpha-D-ribose 1-diphosphate: step 5/9. Functionally, IGPS catalyzes the conversion of PRFAR and glutamine to IGP, AICAR and glutamate. The HisH subunit catalyzes the hydrolysis of glutamine to glutamate and ammonia as part of the synthesis of IGP and AICAR. The resulting ammonia molecule is channeled to the active site of HisF. The polypeptide is Imidazole glycerol phosphate synthase subunit HisH (Blochmanniella floridana).